Consider the following 520-residue polypeptide: GMP synthase [glutamine-hydrolyzing] (520 aa).

A Glutamine amidotransferase type-1 domain is found at 9–202 (SVLIVDFGSQ…IHNVAGIKGD (194 aa)). The Nucleophile role is filled by C86. Residues H176 and E178 contribute to the active site. Residues 203–395 (WSMSAYRQKA…LGLPDSFIGR (193 aa)) enclose the GMPS ATP-PPase domain. 230–236 (SGGVDSS) lines the ATP pocket.

In terms of assembly, homodimer.

The enzyme catalyses XMP + L-glutamine + ATP + H2O = GMP + L-glutamate + AMP + diphosphate + 2 H(+). It functions in the pathway purine metabolism; GMP biosynthesis; GMP from XMP (L-Gln route): step 1/1. In terms of biological role, catalyzes the synthesis of GMP from XMP. The chain is GMP synthase [glutamine-hydrolyzing] from Rhizobium etli (strain ATCC 51251 / DSM 11541 / JCM 21823 / NBRC 15573 / CFN 42).